Consider the following 395-residue polypeptide: Succinyl-diaminopimelate desuccinylase (395 aa).

Histidine 74 contributes to the Zn(2+) binding site. Residue aspartate 76 is part of the active site. Aspartate 107 serves as a coordination point for Zn(2+). Glutamate 141 functions as the Proton acceptor in the catalytic mechanism. The Zn(2+) site is built by glutamate 142, glutamate 170, and histidine 368.

The protein belongs to the peptidase M20A family. DapE subfamily. Homodimer. Zn(2+) is required as a cofactor. Requires Co(2+) as cofactor.

It catalyses the reaction N-succinyl-(2S,6S)-2,6-diaminopimelate + H2O = (2S,6S)-2,6-diaminopimelate + succinate. It participates in amino-acid biosynthesis; L-lysine biosynthesis via DAP pathway; LL-2,6-diaminopimelate from (S)-tetrahydrodipicolinate (succinylase route): step 3/3. Catalyzes the hydrolysis of N-succinyl-L,L-diaminopimelic acid (SDAP), forming succinate and LL-2,6-diaminopimelate (DAP), an intermediate involved in the bacterial biosynthesis of lysine and meso-diaminopimelic acid, an essential component of bacterial cell walls. The sequence is that of Succinyl-diaminopimelate desuccinylase from Brucella canis (strain ATCC 23365 / NCTC 10854 / RM-666).